We begin with the raw amino-acid sequence, 330 residues long: Probable cell division protein WhiA (330 aa).

A DNA-binding region (H-T-H motif) is located at residues 275–308; that stretch reads SLDELGRLSDPPLTKDAIAGRIRRLLAMADRRAE.

It belongs to the WhiA family.

In terms of biological role, involved in cell division and chromosome segregation. The sequence is that of Probable cell division protein WhiA from Kocuria rhizophila (strain ATCC 9341 / DSM 348 / NBRC 103217 / DC2201).